Consider the following 450-residue polypeptide: Hydrolase ffsE (450 aa).

Serine 266 serves as the catalytic Nucleophile.

This sequence belongs to the AB hydrolase superfamily. FUS2 hydrolase family. As to quaternary structure, homodimer.

The protein operates within mycotoxin biosynthesis. In terms of biological role, hydrolase; part of the gene cluster that mediates the biosynthesis of the cytotoxic leucine-containing cytochalasans, including aspochalasin C, aspochalasin E, TMC-169, flavichalasine F, aspergillin PZ, aspochalasin M and flavichalasine G. The first step in the pathway is catalyzed by the hybrid PKS-NRPS ffsA that utilizes 8 units of malonyl-CoA to iteratively assemble the octaketide chain before addition of L-leucine by the C-terminal NRPS modules. Because ffsA lacks a designated enoylreductase (ER) domain, the required activity is provided the enoyl reductase fssC. The methyltransferase (MT) domain of ffsA catalyzes the alpha-methylation at C10 and C14 using S-adenosyl-L-methionine as the methyl-donating cosubstrate. Reduction by the hydrolyase ffsE, followed by dehydration and intra-molecular Diels-Alder cyclization by the Diels-Alderase ffsF then yield the required isoindolone-fused macrocycle. A number of oxidative steps catalyzed by the tailoring cytochrome P450 monooxygenase ffsD, the FAD-linked oxidoreductase ffsJ and the short-chain dehydrogenase/reductase ffsI, are further required to afford the final products. This Aspergillus flavipes protein is Hydrolase ffsE.